The primary structure comprises 294 residues: Transcription repressor OFP14 (294 aa).

A compositionally biased stretch (basic residues) spans 49–60 (SFKHRRRSSKTR). Disordered stretches follow at residues 49–72 (SFKH…HQDS), 96–129 (DDQE…DDDD), and 141–185 (AVYD…SRST). Basic and acidic residues-rich tracts occupy residues 61 to 72 (FSKEEPVYHQDS) and 96 to 117 (DDQE…RESS). The segment covering 118–128 (SDDSDDDDDDD) has biased composition (acidic residues). A compositionally biased stretch (low complexity) spans 164–185 (SSEGRPSMETTSTSSERQSRST). Residues 195 to 259 (VLRYTDEPQE…LSAFVDLIIA (65 aa)) form the OVATE domain.

Interacts with KNAT2 and KNAT3. In terms of tissue distribution, expressed in roots, rosette and cauline leaves, shoots, stems, flower buds and siliques.

It is found in the nucleus. In terms of biological role, transcriptional repressor that may regulate multiple aspects of plant growth and development through the regulation of BEL1-LIKE (BLH) and KNOX TALE (KNAT) homeodomain transcription factors. The polypeptide is Transcription repressor OFP14 (OFP14) (Arabidopsis thaliana (Mouse-ear cress)).